The chain runs to 60 residues: Homeobox protein engrailed-like B (60 aa).

A DNA-binding region (homeobox) is located at residues 1 to 41 (VEQLQRLKSEFGASRYLTEARRQALAQELRLNEAQIKIWFQ).

The protein belongs to the engrailed homeobox family.

Its subcellular location is the nucleus. This is Homeobox protein engrailed-like B from Myxine glutinosa (Atlantic hagfish).